A 409-amino-acid chain; its full sequence is Adenosine deaminase (409 aa).

Positions 65, 67, 207, and 314 each coordinate Zn(2+).

This sequence belongs to the metallo-dependent hydrolases superfamily. The cofactor is Zn(2+).

It carries out the reaction adenosine + H2O + H(+) = inosine + NH4(+). In terms of biological role, catalyzes the deamination of adenosine into inosine. Is also able to deaminate adenine, but with considerably less efficiency. Is not active toward 6-chloroadenine. In Helicobacter pylori (strain ATCC 700392 / 26695) (Campylobacter pylori), this protein is Adenosine deaminase.